A 355-amino-acid polypeptide reads, in one-letter code: MRGVLIAAMVALVVSLLGTPWVIRLFRRQGYGQEIREDGPSSHLTKRGTPTMGGTVIIVAALAGYFLAHLVTGIGFTASGLLVLMVMTGLGLVGFLDDYIKIRKQRSLGLTARMKFTGQAAVAIVFGLLAVRFKNDAGLLPGSTYISIVRDTSLSVGIIAFPLLAWIIIAATSNAVNLTDGLDGLAAGTSAMVFGAYVIISFWQFGNLCEPHAAEAGCYLVRDPLDVALVAAAAMGACFGFLWWNASPAKIFMGDTGSLALGGAFASIAIVSRTELLLVVLGGLFVIETLSVMIQVAFFKATKKRVFNMAPIHHHFELAEWPETTVIIRFWIVSGLAVAFGLGLFYAEFLSHGGG.

The next 10 helical transmembrane spans lie at 3–23 (GVLIAAMVALVVSLLGTPWVI), 56–76 (VIIVAALAGYFLAHLVTGIGF), 80–100 (GLLVLMVMTGLGLVGFLDDYI), 120–140 (AAVAIVFGLLAVRFKNDAGLL), 156–176 (VGIIAFPLLAWIIIAATSNAV), 185–205 (LAAGTSAMVFGAYVIISFWQF), 224–244 (PLDVALVAAAAMGACFGFLWW), 251–271 (IFMGDTGSLALGGAFASIAIV), 276–296 (LLLVVLGGLFVIETLSVMIQV), and 330–350 (FWIVSGLAVAFGLGLFYAEFL).

This sequence belongs to the glycosyltransferase 4 family. MraY subfamily. Requires Mg(2+) as cofactor.

The protein localises to the cell membrane. The enzyme catalyses UDP-N-acetyl-alpha-D-muramoyl-L-alanyl-gamma-D-glutamyl-meso-2,6-diaminopimeloyl-D-alanyl-D-alanine + di-trans,octa-cis-undecaprenyl phosphate = di-trans,octa-cis-undecaprenyl diphospho-N-acetyl-alpha-D-muramoyl-L-alanyl-D-glutamyl-meso-2,6-diaminopimeloyl-D-alanyl-D-alanine + UMP. It functions in the pathway cell wall biogenesis; peptidoglycan biosynthesis. Functionally, catalyzes the initial step of the lipid cycle reactions in the biosynthesis of the cell wall peptidoglycan: transfers peptidoglycan precursor phospho-MurNAc-pentapeptide from UDP-MurNAc-pentapeptide onto the lipid carrier undecaprenyl phosphate, yielding undecaprenyl-pyrophosphoryl-MurNAc-pentapeptide, known as lipid I. This chain is Phospho-N-acetylmuramoyl-pentapeptide-transferase, found in Frankia casuarinae (strain DSM 45818 / CECT 9043 / HFP020203 / CcI3).